The chain runs to 1103 residues: PH, RCC1 and FYVE domains-containing protein 1 (1103 aa).

In terms of domain architecture, PH spans 22–123; it reads KKGTQLLKYG…IWIGGLKTLI (102 aa). Positions 144-233 are disordered; sequence DASRELTSSS…SSSHGSAADD (90 aa). Composition is skewed to low complexity over residues 151–169 and 217–231; these read SSSPSSSSASASRGHSSPG and SVSSAQSSSSHGSAA. 7 RCC1 repeats span residues 237-298, 299-351, 353-406, 407-458, 471-522, 524-574, and 575-626; these read LGDV…FVTR, QGEI…AVTL, GELY…LITS, YGRL…AVVE, SGKL…GLTT, GQVF…ALTS, and RNEV…AICL. Residues 632–694 form an FYVE-type zinc finger; the sequence is GAEQSQCSTC…VCDSCYVKLS (63 aa). Zn(2+)-binding residues include Cys638, Cys641, Cys654, Cys657, Cys662, Cys665, Cys686, and Cys689. Residues 783–818 are disordered; that stretch reads ATPKLAQAPSGISSRSVSPFSRRSSPPRSATPMPST. Low complexity predominate over residues 791 to 818; sequence PSGISSRSVSPFSRRSSPPRSATPMPST. Positions 828–904 form a coiled coil; it reads ADNMKKTNEI…IAQLKDVAEK (77 aa). Over residues 962 to 979 the composition is skewed to polar residues; it reads NLQSPKQTPRASERNSNA. Positions 962-988 are disordered; the sequence is NLQSPKQTPRASERNSNAYPADPRLSS. Positions 1023–1078 constitute a BRX domain; the sequence is AEWIEQYEPGVYITLVALHDGTRDLRRVRFSRRRFGEHQAETWWSENREKVYEKYN. The interval 1079 to 1103 is disordered; it reads VRVSEKSTASQTHRDRDEEEEDIPH.

In terms of tissue distribution, mostly expressed in flowers, and, to a lower extent, in stems, leaves, siliques, seeds.

In terms of biological role, binds to phosphatidic acid and to phosphoinositides such as PtdIns3P, PtdIns(3,4)P(2), PtdIns(3,4,5)P(3) and PtdIns(4,5)P(2). Catalyzes guanine nucleotide exchange on specific Rab proteins. The polypeptide is PH, RCC1 and FYVE domains-containing protein 1 (Arabidopsis thaliana (Mouse-ear cress)).